Here is a 407-residue protein sequence, read N- to C-terminus: 45 kDa calcium-binding protein (407 aa).

The N-terminal stretch at 1–35 is a signal peptide; the sequence is MVWSWVAMASRWGPLVGLAPRCLWLLGAVLLMDAS. A glycan (N-linked (GlcNAc...) asparagine) is linked at Asn40. 2 EF-hand domains span residues 98–133 and 137–172; these read RSRRKLMVIFSKVDVNTDRKISAKEMQRWIMEKTAE and EAMEESKTHFRAVDPDGDGHVSWDEYKVKFLASKGH. The residue at position 99 (Ser99) is a Phosphoserine. Residues Asp111, Asn113, Asp115, Lys117, Glu122, Asp150, Asp152, Asp154, His156, and Glu161 each coordinate Ca(2+). A phosphothreonine mark is found at Thr193 and Thr217. The segment covering 249–259 has biased composition (low complexity); the sequence is GSSLAGAPGPG. Residues 249–282 are disordered; that stretch reads GSSLAGAPGPGDQRQGPGIAGKSGKVLREPQPGC. Positions 291, 293, 295, 297, and 302 each coordinate Ca(2+). EF-hand domains follow at residues 291–313, 323–358, and 359–394; these read DQDGDKQLSLPEFVSLPVGTVEN, WVKDRKKEFEELIDSNHDGIVTAEELESYMDPMNEY, and NALNEAKQMIAVADENQNHHLEPEEVLKYSEFFTGS. The residue at position 310 (Thr310) is a Phosphothreonine. 3 residues coordinate Ca(2+): Asp336, Asn338, and Asp340. Thr344 is modified (phosphothreonine). Positions 347, 372, 374, 376, 378, and 383 each coordinate Ca(2+). The necessary for intracellular retention in Golgi apparatus lumen stretch occupies residues 354–407; that stretch reads PMNEYNALNEAKQMIAVADENQNHHLEPEEVLKYSEFFTGSKLVDYARSVHEEF.

The protein belongs to the CREC family.

The protein resides in the golgi apparatus lumen. Its function is as follows. May regulate calcium-dependent activities in the endoplasmic reticulum lumen or post-ER compartment. The sequence is that of 45 kDa calcium-binding protein (SDF4) from Macaca fascicularis (Crab-eating macaque).